A 131-amino-acid chain; its full sequence is Maturin (131 aa).

The span at 107 to 120 (FEEYNADVEEEEPE) shows a compositional bias: acidic residues. The interval 107 to 131 (FEEYNADVEEEEPEADHQQMGVSQQ) is disordered.

The protein belongs to the MTURN family.

It localises to the cytoplasm. In terms of biological role, involved in early neuronal development; required for cell cycle exit and differentiation of primary neurons. Cooperates synergistically with pak3 to promote primary neural differentiation within the neural plate. May play a role in promoting megakaryocyte differentiation. In Xenopus laevis (African clawed frog), this protein is Maturin (mturn).